A 275-amino-acid polypeptide reads, in one-letter code: Large ribosomal subunit protein uL2c (275 aa).

The segment at 225-275 (MNPCDHPHGGGEGRSPIGRPRPVSPWGKPALGQRTRKGHKYSDQMILRRRK) is disordered.

It belongs to the universal ribosomal protein uL2 family. In terms of assembly, part of the 50S ribosomal subunit.

It is found in the plastid. The protein resides in the chloroplast. This is Large ribosomal subunit protein uL2c (rpl2) from Oltmannsiellopsis viridis (Marine flagellate).